Here is a 301-residue protein sequence, read N- to C-terminus: Acetyl-coenzyme A carboxylase carboxyl transferase subunit beta (301 aa).

One can recognise a CoA carboxyltransferase N-terminal domain in the interval Leu25–Ala294.

The protein belongs to the AccD/PCCB family. Acetyl-CoA carboxylase is a heterohexamer composed of biotin carboxyl carrier protein (AccB), biotin carboxylase (AccC) and two subunits each of ACCase subunit alpha (AccA) and ACCase subunit beta (AccD).

The protein localises to the cytoplasm. It carries out the reaction N(6)-carboxybiotinyl-L-lysyl-[protein] + acetyl-CoA = N(6)-biotinyl-L-lysyl-[protein] + malonyl-CoA. It functions in the pathway lipid metabolism; malonyl-CoA biosynthesis; malonyl-CoA from acetyl-CoA: step 1/1. Its function is as follows. Component of the acetyl coenzyme A carboxylase (ACC) complex. Biotin carboxylase (BC) catalyzes the carboxylation of biotin on its carrier protein (BCCP) and then the CO(2) group is transferred by the transcarboxylase to acetyl-CoA to form malonyl-CoA. The polypeptide is Acetyl-coenzyme A carboxylase carboxyl transferase subunit beta (Rhizobium etli (strain CIAT 652)).